The sequence spans 265 residues: Hydroxyethylthiazole kinase 2 (265 aa).

A substrate-binding site is contributed by methionine 39. The ATP site is built by lysine 115 and threonine 168. Glycine 195 serves as a coordination point for substrate.

It belongs to the Thz kinase family. The cofactor is Mg(2+).

The catalysed reaction is 5-(2-hydroxyethyl)-4-methylthiazole + ATP = 4-methyl-5-(2-phosphooxyethyl)-thiazole + ADP + H(+). The protein operates within cofactor biosynthesis; thiamine diphosphate biosynthesis; 4-methyl-5-(2-phosphoethyl)-thiazole from 5-(2-hydroxyethyl)-4-methylthiazole: step 1/1. Its function is as follows. Catalyzes the phosphorylation of the hydroxyl group of 4-methyl-5-beta-hydroxyethylthiazole (THZ). The polypeptide is Hydroxyethylthiazole kinase 2 (Clostridium botulinum (strain Okra / Type B1)).